The primary structure comprises 222 residues: Protein GrpE (222 aa).

The segment at 1 to 21 is disordered; the sequence is MSDEKNKFTDASFENCDLKNP.

The protein belongs to the GrpE family. As to quaternary structure, homodimer.

It localises to the cytoplasm. Its function is as follows. Participates actively in the response to hyperosmotic and heat shock by preventing the aggregation of stress-denatured proteins, in association with DnaK and GrpE. It is the nucleotide exchange factor for DnaK and may function as a thermosensor. Unfolded proteins bind initially to DnaJ; upon interaction with the DnaJ-bound protein, DnaK hydrolyzes its bound ATP, resulting in the formation of a stable complex. GrpE releases ADP from DnaK; ATP binding to DnaK triggers the release of the substrate protein, thus completing the reaction cycle. Several rounds of ATP-dependent interactions between DnaJ, DnaK and GrpE are required for fully efficient folding. This Bartonella tribocorum (strain CIP 105476 / IBS 506) protein is Protein GrpE.